Here is a 615-residue protein sequence, read N- to C-terminus: Membrane protein insertase YidC (615 aa).

The next 5 helical transmembrane spans lie at 9 to 29 (LMFI…VLGP), 384 to 404 (LVGN…LVLY), 458 to 478 (LPML…TVTI), 516 to 536 (LIGA…FTMW), and 556 to 576 (WFPV…VIYW).

This sequence belongs to the OXA1/ALB3/YidC family. Type 1 subfamily. Interacts with the Sec translocase complex via SecD. Specifically interacts with transmembrane segments of nascent integral membrane proteins during membrane integration.

It localises to the cell inner membrane. In terms of biological role, required for the insertion and/or proper folding and/or complex formation of integral membrane proteins into the membrane. Involved in integration of membrane proteins that insert both dependently and independently of the Sec translocase complex, as well as at least some lipoproteins. Aids folding of multispanning membrane proteins. The chain is Membrane protein insertase YidC from Caulobacter vibrioides (strain ATCC 19089 / CIP 103742 / CB 15) (Caulobacter crescentus).